The following is a 179-amino-acid chain: Monothiol glutaredoxin-S12, chloroplastic (179 aa).

The transit peptide at 1–61 (MVAATVNLAN…WPPLRCSSVK (61 aa)) directs the protein to the chloroplast. An N-acetylalanine modification is found at Ala-62. Positions 75–176 (EETVKTTVAE…AILAEANGKN (102 aa)) constitute a Glutaredoxin domain. Cys-95 is a binding site for [2Fe-2S] cluster.

It belongs to the glutaredoxin family. CPYC subfamily.

The protein resides in the plastid. It is found in the chloroplast. Its function is as follows. May only reduce GSH-thiol disulfides, but not protein disulfides. The protein is Monothiol glutaredoxin-S12, chloroplastic (GRXS12) of Arabidopsis thaliana (Mouse-ear cress).